Consider the following 224-residue polypeptide: 4'-phosphopantetheinyl transferase (224 aa).

Mg(2+)-binding residues include aspartate 107, glutamate 109, and glutamate 151. The tract at residues glycine 158 to cysteine 189 is peptidyl carrier protein binding.

This sequence belongs to the P-Pant transferase superfamily. Gsp/Sfp/HetI/AcpT family. The cofactor is Mg(2+).

The enzyme catalyses apo-[peptidyl-carrier protein] + CoA = holo-[peptidyl-carrier protein] + adenosine 3',5'-bisphosphate + H(+). Functionally, may activate the peptidyl carrier protein (PCP) domains of surfactin synthetase SRF1/2/3 and iturin A synthetase, by transferring the 4'-phosphopantetheinyl moiety of coenzyme A (CoA) to a serine residue. Required for the coproduction of the lipopeptide antibiotics, iturin A and surfactin. The chain is 4'-phosphopantetheinyl transferase (lpa-14) from Bacillus subtilis.